Consider the following 251-residue polypeptide: Protein unc-119 homolog B (251 aa).

The segment covering 1-13 (MSGSNPKAATAGS) has biased composition (polar residues). Residues 1-56 (MSGSNPKAATAGSQAGPGGLVAGKEEKKKAGGGVLNRLKARRQGPPHTPDDGSGAA) form a disordered region. At Ser2 the chain carries N-acetylserine. Lys24 is modified (N6-acetyllysine). Tyr142 is a binding site for tetradecanoate.

The protein belongs to the PDE6D/unc-119 family. In terms of assembly, found in a complex with ARL3, RP2 and UNC119B; RP2 induces hydrolysis of GTP ARL3 in the complex, leading to the release of UNC119B. Interacts with NPHP3 (when myristoylated). Interacts with CYS1 (when myristoylated). Interacts with MACIR; interaction only takes place when UNC119B is not liganded with myristoylated proteins.

Its subcellular location is the cell projection. It localises to the cilium. Functionally, myristoyl-binding protein that acts as a cargo adapter: specifically binds the myristoyl moiety of a subset of N-terminally myristoylated proteins and is required for their localization. Binds myristoylated NPHP3 and plays a key role in localization of NPHP3 to the primary cilium membrane. Does not bind all myristoylated proteins. Probably plays a role in trafficking proteins in photoreceptor cells. The protein is Protein unc-119 homolog B (Unc119b) of Mus musculus (Mouse).